A 403-amino-acid chain; its full sequence is Na(+)/H(+) antiporter NhaH (403 aa).

Topologically, residues 1-6 (MHGFHD) are cytoplasmic. A helical membrane pass occupies residues 7-27 (VFIQILLLLAISVSVIAIAKL). The Extracellular portion of the chain corresponds to 28 to 30 (LKE). Residues 31–51 (PDSIALVLVGLVLGLTELPII) traverse the membrane as a helical segment. Residues 52–65 (EDAERYITQSEVFQ) are Cytoplasmic-facing. Residues 66 to 86 (ATIISLFLPILLGDATLKLPF) traverse the membrane as a helical segment. Residues 87–98 (HHLFSQKKTVLG) lie on the Extracellular side of the membrane. A helical transmembrane segment spans residues 99–119 (LAFVGTFVSSICIGTAAYFLL). Residues 120–124 (DLPLA) are Cytoplasmic-facing. Residues 125-145 (VAFTFAALMSATDPISVLSIF) form a helical membrane-spanning segment. The Extracellular segment spans residues 146–167 (KSLGVPQKMSTVMEGESLFNDG). The helical transmembrane segment at 168–188 (IAVVLFKIASIYLLTYMEMGW) threads the bilayer. Residues 189–195 (AGLGSGV) lie on the Cytoplasmic side of the membrane. A helical transmembrane segment spans residues 196–216 (FLFLKFAIGGALVGLVLGYFF). Topologically, residues 217 to 218 (SQ) are extracellular. The chain crosses the membrane as a helical span at residues 219-239 (VIRVFDDYPLEVAFSALLFFG). At 240-241 (SY) the chain is on the cytoplasmic side. Residues 242–262 (FIAEHFHTSGVIAVVVGGFVF) form a helical membrane-spanning segment. Residues 263-281 (GDYGAKIGMSKETKTNINT) lie on the Extracellular side of the membrane. The chain crosses the membrane as a helical span at residues 282–302 (FWDSVTLIANALIFLMVGLEI). Over 303–310 (RNIDLAGN) the chain is Cytoplasmic. A helical membrane pass occupies residues 311-331 (WGVIVGAILIVLVGRTIAVYL). The Extracellular portion of the chain corresponds to 332 to 372 (GTGWVQELSSKERLLINWGGLRGSLSVALALSLPMDFAGRD). The helical transmembrane segment at 373 to 393 (QVLLLTFSVVLFSLIVQGLTL) threads the bilayer. Over 394 to 403 (KPLIKKLGMI) the chain is Cytoplasmic.

The protein belongs to the monovalent cation:proton antiporter 1 (CPA1) transporter (TC 2.A.36) family.

The protein resides in the cell membrane. Its function is as follows. Na(+)/H(+) antiporter that extrudes sodium in exchange for external protons. Can also transport lithium. In Halobacillus dabanensis, this protein is Na(+)/H(+) antiporter NhaH (nhaH).